Consider the following 345-residue polypeptide: tRNA dimethylallyltransferase (345 aa).

An ATP-binding site is contributed by 9–16 (GPTASGKS). 11–16 (TASGKS) provides a ligand contact to substrate. 2 interaction with substrate tRNA regions span residues 34–37 (DSMQ) and 195–199 (QRMIR).

It belongs to the IPP transferase family. In terms of assembly, monomer. Mg(2+) is required as a cofactor.

The catalysed reaction is adenosine(37) in tRNA + dimethylallyl diphosphate = N(6)-dimethylallyladenosine(37) in tRNA + diphosphate. Functionally, catalyzes the transfer of a dimethylallyl group onto the adenine at position 37 in tRNAs that read codons beginning with uridine, leading to the formation of N6-(dimethylallyl)adenosine (i(6)A). The chain is tRNA dimethylallyltransferase from Orientia tsutsugamushi (strain Boryong) (Rickettsia tsutsugamushi).